The primary structure comprises 274 residues: MTLQEEIIRQLGVKASIDPQEEIRKAVDFLKAYLRKHSFLKTYVLGISGGQDSTLAGKLAQMAIAELREEASDQAYQFIAVRLPYGVQADEADAQKALAFIAPDQTLTINIKAAVDGQVEALQAAGVEISDFNKGNIKARQRMISQYAIAGQMAGAVIGTDHAAENITGFFTKFGDGGADILPLFRLNKRQGKALLKVLGADAALYEKVPTADLEDQKPGLADEVALGVTYQDIDDYLEGKLISKVAQATIEKWWHKGQHKRHLPITIFDDFWK.

46–53 contacts ATP; sequence GISGGQDS. A Mg(2+)-binding site is contributed by Asp52. Arg140 serves as a coordination point for deamido-NAD(+). Thr160 provides a ligand contact to ATP. Position 165 (Glu165) interacts with Mg(2+). Lys173 and Asp180 together coordinate deamido-NAD(+). 2 residues coordinate ATP: Lys189 and Thr211. 260 to 261 contributes to the deamido-NAD(+) binding site; it reads HK.

Belongs to the NAD synthetase family. As to quaternary structure, homodimer.

The enzyme catalyses deamido-NAD(+) + NH4(+) + ATP = AMP + diphosphate + NAD(+) + H(+). The protein operates within cofactor biosynthesis; NAD(+) biosynthesis; NAD(+) from deamido-NAD(+) (ammonia route): step 1/1. In terms of biological role, catalyzes the ATP-dependent amidation of deamido-NAD to form NAD. Uses ammonia as a nitrogen source. The sequence is that of NH(3)-dependent NAD(+) synthetase from Streptococcus pyogenes serotype M1.